Consider the following 894-residue polypeptide: Cell wall-associated protease (894 aa).

The N-terminal stretch at 1–31 is a signal peptide; the sequence is MKRRKFSSVVAAVLIFALIFSLFSPGTKAAA. Residues 422-729 form the Peptidase S8 domain; sequence QWPLKNNGEN…YGRLNVMKAV (308 aa). Catalysis depends on charge relay system residues aspartate 462, histidine 497, and serine 650.

Belongs to the peptidase S8 family. In terms of processing, proteolytically cleaved to yield CWBP23 and CWBP52.

It is found in the secreted. It localises to the cell wall. Inhibited by PMSF. In terms of biological role, CWBP52 is a serine-type protease that could be involved in proteoglycan peptide bridges. The polypeptide is Cell wall-associated protease (wprA) (Bacillus subtilis (strain 168)).